The primary structure comprises 157 residues: Small ribosomal subunit protein uS7 (157 aa).

Belongs to the universal ribosomal protein uS7 family. In terms of assembly, part of the 30S ribosomal subunit. Contacts proteins S9 and S11.

Its function is as follows. One of the primary rRNA binding proteins, it binds directly to 16S rRNA where it nucleates assembly of the head domain of the 30S subunit. Is located at the subunit interface close to the decoding center, probably blocks exit of the E-site tRNA. In Salinibacter ruber (strain DSM 13855 / M31), this protein is Small ribosomal subunit protein uS7.